The sequence spans 340 residues: Histidinol-phosphate aminotransferase (340 aa).

An N6-(pyridoxal phosphate)lysine modification is found at K204.

This sequence belongs to the class-II pyridoxal-phosphate-dependent aminotransferase family. Histidinol-phosphate aminotransferase subfamily. Pyridoxal 5'-phosphate serves as cofactor.

It carries out the reaction L-histidinol phosphate + 2-oxoglutarate = 3-(imidazol-4-yl)-2-oxopropyl phosphate + L-glutamate. It functions in the pathway amino-acid biosynthesis; L-histidine biosynthesis; L-histidine from 5-phospho-alpha-D-ribose 1-diphosphate: step 7/9. This is Histidinol-phosphate aminotransferase from Thermococcus gammatolerans (strain DSM 15229 / JCM 11827 / EJ3).